A 108-amino-acid polypeptide reads, in one-letter code: UPF0060 membrane protein DSY4629 (108 aa).

The next 4 helical transmembrane spans lie at 5–25 (IILF…VWLW), 31–51 (PFWY…IPTL), 60–80 (VYAA…WGID), and 86–106 (NYDW…LWAP).

The protein belongs to the UPF0060 family.

The protein localises to the cell membrane. The polypeptide is UPF0060 membrane protein DSY4629 (Desulfitobacterium hafniense (strain Y51)).